The sequence spans 416 residues: Tyrosine--tRNA ligase (416 aa).

Tyr39 contacts L-tyrosine. The 'HIGH' region signature appears at 44-53 (CTAPSLHAGH). L-tyrosine-binding residues include Tyr176 and Gln180. A 'KMSKS' region motif is present at residues 236–240 (KMGKT). Residue Lys239 participates in ATP binding. The 66-residue stretch at 349–414 (ISLVDLLHDT…AGKKRHIKVV (66 aa)) folds into the S4 RNA-binding domain.

This sequence belongs to the class-I aminoacyl-tRNA synthetase family. TyrS type 1 subfamily. In terms of assembly, homodimer.

The protein resides in the cytoplasm. The enzyme catalyses tRNA(Tyr) + L-tyrosine + ATP = L-tyrosyl-tRNA(Tyr) + AMP + diphosphate + H(+). Its function is as follows. Catalyzes the attachment of tyrosine to tRNA(Tyr) in a two-step reaction: tyrosine is first activated by ATP to form Tyr-AMP and then transferred to the acceptor end of tRNA(Tyr). The sequence is that of Tyrosine--tRNA ligase from Wolbachia pipientis wMel.